The chain runs to 187 residues: Elongation factor P (187 aa).

The protein belongs to the elongation factor P family.

Its subcellular location is the cytoplasm. The protein operates within protein biosynthesis; polypeptide chain elongation. In terms of biological role, involved in peptide bond synthesis. Stimulates efficient translation and peptide-bond synthesis on native or reconstituted 70S ribosomes in vitro. Probably functions indirectly by altering the affinity of the ribosome for aminoacyl-tRNA, thus increasing their reactivity as acceptors for peptidyl transferase. This Chelativorans sp. (strain BNC1) protein is Elongation factor P.